A 296-amino-acid chain; its full sequence is Phosphatidylcholine:diacylglycerol cholinephosphotransferase 2 (296 aa).

Helical transmembrane passes span 83-103 (HWIP…EYTF), 136-156 (VLAA…GCTW), 165-182 (TIAA…GYST), 198-218 (PVGN…SMIA), and 250-270 (GHYT…DSLA). Catalysis depends on residues His-211, His-251, and Asp-255.

The protein belongs to the phosphatidylcholine:diacylglycerol cholinephosphotransferase family.

It is found in the membrane. Functions as a phosphatidylcholine:diacylglycerol cholinephosphotransferase that catalyzes the transfer of the phosphocholine headgroup from phosphatidylcholine (PC) to diacylglycerol, a major reaction for the transfer of 18:1 into phosphatidylcholine for desaturation and also for the reverse transfer of 18:2 and 18:3 into the triacylglycerols synthesis pathway. The polypeptide is Phosphatidylcholine:diacylglycerol cholinephosphotransferase 2 (Arabidopsis thaliana (Mouse-ear cress)).